Consider the following 292-residue polypeptide: Ribosomal protein L11 methyltransferase (292 aa).

Residues Thr-136, Gly-159, Asp-181, and Asn-228 each contribute to the S-adenosyl-L-methionine site.

Belongs to the methyltransferase superfamily. PrmA family.

It is found in the cytoplasm. The enzyme catalyses L-lysyl-[protein] + 3 S-adenosyl-L-methionine = N(6),N(6),N(6)-trimethyl-L-lysyl-[protein] + 3 S-adenosyl-L-homocysteine + 3 H(+). Functionally, methylates ribosomal protein L11. In Rhizobium etli (strain ATCC 51251 / DSM 11541 / JCM 21823 / NBRC 15573 / CFN 42), this protein is Ribosomal protein L11 methyltransferase.